Here is a 529-residue protein sequence, read N- to C-terminus: Bifunctional purine biosynthesis protein PurH (529 aa).

One can recognise an MGS-like domain in the interval 1 to 148 (MQQRRPIRRA…KNHKDVAIVV (148 aa)). Position 287 is an N6-acetyllysine (Lys-287).

The protein belongs to the PurH family.

The enzyme catalyses (6R)-10-formyltetrahydrofolate + 5-amino-1-(5-phospho-beta-D-ribosyl)imidazole-4-carboxamide = 5-formamido-1-(5-phospho-D-ribosyl)imidazole-4-carboxamide + (6S)-5,6,7,8-tetrahydrofolate. It catalyses the reaction IMP + H2O = 5-formamido-1-(5-phospho-D-ribosyl)imidazole-4-carboxamide. The protein operates within purine metabolism; IMP biosynthesis via de novo pathway; 5-formamido-1-(5-phospho-D-ribosyl)imidazole-4-carboxamide from 5-amino-1-(5-phospho-D-ribosyl)imidazole-4-carboxamide (10-formyl THF route): step 1/1. Its pathway is purine metabolism; IMP biosynthesis via de novo pathway; IMP from 5-formamido-1-(5-phospho-D-ribosyl)imidazole-4-carboxamide: step 1/1. The polypeptide is Bifunctional purine biosynthesis protein PurH (Escherichia coli O139:H28 (strain E24377A / ETEC)).